Consider the following 95-residue polypeptide: Co-chaperonin GroES (95 aa).

The protein belongs to the GroES chaperonin family. In terms of assembly, heptamer of 7 subunits arranged in a ring. Interacts with the chaperonin GroEL.

It is found in the cytoplasm. In terms of biological role, together with the chaperonin GroEL, plays an essential role in assisting protein folding. The GroEL-GroES system forms a nano-cage that allows encapsulation of the non-native substrate proteins and provides a physical environment optimized to promote and accelerate protein folding. GroES binds to the apical surface of the GroEL ring, thereby capping the opening of the GroEL channel. This Rickettsia canadensis (strain McKiel) protein is Co-chaperonin GroES.